The primary structure comprises 557 residues: MANVIKTVLTYQLDGSNRDFNIPFEYLARKFVVVTLIGVDRKVLSINADYRFATRTTISLTKAWGPADGYTTIELRRVTSTTDQLVDFTDGSILRAYDLNVAQIQTMHVAEEARDLTADTIGVNNDGHLDARGRRIVNLANAVDDRDAVPFGQLKTMNQNSWQARNEALQFRNEAETFRNQTEVFKNESGTNATNTKQWRDEANGSRDEAEQFKNTAGQYATSAGNSATTATQSEVNAENSATDADNSRNLAEQHADRLELEADKLGIFNGLAGRIDKGDGTNVYWKGGIHANGRLYLTSDGFDCGQYQQFFGGSAGRYSVMEWGIEKAWLMHVERRERTTAIVDNIQLVVNGHIIAQGGDMTGPLKLQNGHALYLESASDKAQYILSKDGNRNNWHIGRGSDNNNDCTFHSYVYGTNLTLKPDYAVVNKRFHVGQAVVATDGNIQGTKWGRKWLDAYLNDTYVKKTMAWTQVWAAASDSYMGGGSQTDTLHRTCDSATYGLRPETTIGTSSELVLTVSTSFQPRRWLKFQIHSNGRVFKNIADRAATPTAIAVEDV.

The segment covering 187 to 197 (NESGTNATNTK) has biased composition (polar residues). The segment at 187 to 249 (NESGTNATNT…NSATDADNSR (63 aa)) is disordered. Residues 198–212 (QWRDEANGSRDEAEQ) show a composition bias toward basic and acidic residues. Over residues 221 to 234 (ATSAGNSATTATQS) the composition is skewed to low complexity. Polar residues predominate over residues 235-249 (EVNAENSATDADNSR).

The protein belongs to the T7likevirus tail fiber protein family. Homotrimerizes. Interacts with tail components gp11 and gp12.

The protein resides in the virion. Structural component of the short non-contractile tail. The tail comprises six fibers made of gp17 trimers, 2 nm in diameter and 32 nm in length. May attach to host lipopolysaccharides (LPS) to mediate primary attachment to the host cell. In Escherichia coli (Bacteriophage T3), this protein is Tail fiber protein (17).